We begin with the raw amino-acid sequence, 69 residues long: Cell division protein ZapB (69 aa).

Positions L6–E68 form a coiled coil.

Belongs to the ZapB family. In terms of assembly, homodimer. The ends of the coiled-coil dimer bind to each other, forming polymers. Interacts with FtsZ.

The protein resides in the cytoplasm. Non-essential, abundant cell division factor that is required for proper Z-ring formation. It is recruited early to the divisome by direct interaction with FtsZ, stimulating Z-ring assembly and thereby promoting cell division earlier in the cell cycle. Its recruitment to the Z-ring requires functional FtsA or ZipA. This chain is Cell division protein ZapB, found in Tolumonas auensis (strain DSM 9187 / NBRC 110442 / TA 4).